Consider the following 105-residue polypeptide: Large ribosomal subunit protein eL36 (105 aa).

This sequence belongs to the eukaryotic ribosomal protein eL36 family. In terms of assembly, component of the large ribosomal subunit.

The protein resides in the cytoplasm. It localises to the cytosol. Component of the large ribosomal subunit. The ribosome is a large ribonucleoprotein complex responsible for the synthesis of proteins in the cell. This chain is Large ribosomal subunit protein eL36 (RPL36), found in Gallus gallus (Chicken).